The primary structure comprises 478 residues: Cytochrome P450 monooxygenase ATR3 (478 aa).

The helical transmembrane segment at Ala-20–Leu-42 threads the bilayer. Asn-159 and Asn-268 each carry an N-linked (GlcNAc...) asparagine glycan.

This sequence belongs to the cytochrome P450 family. It depends on heme as a cofactor.

Its subcellular location is the membrane. Its pathway is mycotoxin biosynthesis. Cytochrome P450 monooxygenase; part of the core atranone cluster (CAC) which products are predicted to catalyze most or all steps of mycotoxin atranone synthesis, starting from geranylgeranyl pyrophosphate (GGPP). The initial cyclization of GGPP to dolabellane is probably performed by the terpene cyclase ATR13. The Baeyer-Villiger oxidation near the end of the atranone synthesis, which converts atranones D and E to atranones F and G is predicted to be catalyzed by the monooxygenase ATR8. Of the CAC's other predicted gene products, the reducing PKS ATR6 might synthesize a polyketide chain. This polyketide is probably transferred onto the atranone backbone by the polyketide transferase ATR5. Other predicted CAC products include 4 oxygenases (ATR2, ATR3, ATR4, and ATR14), 3 short-chain reductases (ATR7, ATR9, and ATR10), and a methyltransferase (ATR12). These may all be involved in the various steps of atranone biosynthesis, although their specific roles must await experimental determination. The sequence is that of Cytochrome P450 monooxygenase ATR3 from Stachybotrys chlorohalonatus (strain IBT 40285).